A 74-amino-acid polypeptide reads, in one-letter code: U4-theraphotoxin-Cg1a (74 aa).

An N-terminal signal peptide occupies residues methionine 1–alanine 19. Residues alanine 20 to arginine 39 constitute a propeptide that is removed on maturation. Intrachain disulfides connect cysteine 42–cysteine 56, cysteine 49–cysteine 61, and cysteine 55–cysteine 71.

It belongs to the neurotoxin 36 family. 01 subfamily. Expressed by the venom gland.

It is found in the secreted. Probable ion channel inhibitor. This chain is U4-theraphotoxin-Cg1a, found in Chilobrachys guangxiensis (Chinese earth tiger tarantula).